The sequence spans 191 residues: Superoxide dismutase [Mn/Fe] (191 aa).

Residues H27, H74, D157, and H161 each contribute to the Fe(3+) site. The Mn(2+) site is built by H27, H74, D157, and H161.

The protein belongs to the iron/manganese superoxide dismutase family. In terms of assembly, homodimer. Mn(2+) is required as a cofactor. Fe(3+) serves as cofactor.

The catalysed reaction is 2 superoxide + 2 H(+) = H2O2 + O2. With respect to regulation, inhibited by hydrogen peroxide. Its function is as follows. Destroys superoxide anion radicals which are normally produced within the cells and which are toxic to biological systems. Catalyzes the dismutation of superoxide anion radicals into O2 and H2O2 by successive reduction and oxidation of the transition metal ion at the active site. This Porphyromonas gingivalis (strain ATCC BAA-308 / W83) protein is Superoxide dismutase [Mn/Fe] (sodB).